A 495-amino-acid polypeptide reads, in one-letter code: Cardiolipin synthase A (495 aa).

Transmembrane regions (helical) follow at residues 9–29 (IEVLFVIIKWILLLGYWWLIT) and 46–66 (MAWLLIIYVVPFIGAIIYLLL). PLD phosphodiesterase domains follow at residues 227–254 (MDLRQHRKMILIDNYIGYTGSMNMIDPK) and 408–435 (EGGLLHTKSILVDDQLSLVGTVNLDMRS). Residues histidine 232, lysine 234, aspartate 239, histidine 413, lysine 415, and aspartate 420 contribute to the active site.

Belongs to the phospholipase D family. Cardiolipin synthase subfamily. ClsA sub-subfamily.

Its subcellular location is the cell membrane. The catalysed reaction is 2 a 1,2-diacyl-sn-glycero-3-phospho-(1'-sn-glycerol) = a cardiolipin + glycerol. Functionally, catalyzes the reversible phosphatidyl group transfer from one phosphatidylglycerol molecule to another to form cardiolipin (CL) (diphosphatidylglycerol) and glycerol. The protein is Cardiolipin synthase A of Wigglesworthia glossinidia brevipalpis.